The chain runs to 163 residues: Antimicrobial peptide 2 (163 aa).

An N-terminal signal peptide occupies residues 1–22 (MLNMKSFALLMLFATLVGVTIA). 2 consecutive Chitin-binding type-1 domains span residues 26 to 66 (NGKC…EIEP) and 69 to 107 (AGQC…SCLP). Disulfide bonds link C29/C42, C36/C48, and C41/C55. A propeptide spanning residues 58–67 (NTPLSEIEPT) is cleaved from the precursor. 4 disulfide bridges follow: C72/C83, C77/C89, C82/C96, and C101/C105. A propeptide spanning residues 100 to 163 (MCQGSCLPDM…QVEPAVTKAP (64 aa)) is cleaved from the precursor.

Expressed in roots, flowers, stem and leaves.

Functionally, antimicrobial peptide. The polypeptide is Antimicrobial peptide 2 (Stellaria media (Common chickweed)).